The primary structure comprises 324 residues: Putative S-adenosyl-L-methionine-dependent methyltransferase MUL_0818 (324 aa).

S-adenosyl-L-methionine contacts are provided by residues D138 and 167 to 168; that span reads DL.

This sequence belongs to the UPF0677 family.

Exhibits S-adenosyl-L-methionine-dependent methyltransferase activity. The chain is Putative S-adenosyl-L-methionine-dependent methyltransferase MUL_0818 from Mycobacterium ulcerans (strain Agy99).